Consider the following 184-residue polypeptide: NADH-quinone oxidoreductase subunit B (184 aa).

4 residues coordinate [4Fe-4S] cluster: Cys37, Cys38, Cys103, and Cys132.

Belongs to the complex I 20 kDa subunit family. As to quaternary structure, NDH-1 is composed of 14 different subunits. Subunits NuoB, C, D, E, F, and G constitute the peripheral sector of the complex. The cofactor is [4Fe-4S] cluster.

It is found in the cell membrane. It catalyses the reaction a quinone + NADH + 5 H(+)(in) = a quinol + NAD(+) + 4 H(+)(out). Functionally, NDH-1 shuttles electrons from NADH, via FMN and iron-sulfur (Fe-S) centers, to quinones in the respiratory chain. The immediate electron acceptor for the enzyme in this species is believed to be a menaquinone. Couples the redox reaction to proton translocation (for every two electrons transferred, four hydrogen ions are translocated across the cytoplasmic membrane), and thus conserves the redox energy in a proton gradient. This chain is NADH-quinone oxidoreductase subunit B, found in Mycolicibacterium smegmatis (strain ATCC 700084 / mc(2)155) (Mycobacterium smegmatis).